The primary structure comprises 199 residues: UPF0301 protein Vapar_4617 (199 aa).

The protein belongs to the UPF0301 (AlgH) family.

The chain is UPF0301 protein Vapar_4617 from Variovorax paradoxus (strain S110).